The sequence spans 354 residues: Lysine racemase (354 aa).

Lys36 carries the post-translational modification N6-(pyridoxal phosphate)lysine.

Belongs to the alanine racemase family. In terms of assembly, homodimer. Pyridoxal 5'-phosphate serves as cofactor.

It carries out the reaction L-lysine = D-lysine. The catalysed reaction is L-ornithine = D-ornithine. It participates in cell wall biogenesis; peptidoglycan biosynthesis. Its function is as follows. Catalyzes the interconversion of D-lysine and L-lysine. Has also high activity toward ornithine, and weaker activity toward alanine. Contributes to production of D-lysine and D-alanine for use as peptidoglycan components. This chain is Lysine racemase, found in Thermotoga maritima (strain ATCC 43589 / DSM 3109 / JCM 10099 / NBRC 100826 / MSB8).